The primary structure comprises 275 residues: Holocytochrome c-type synthase (275 aa).

Disordered stretches follow at residues 1–59 (MGLS…KTNS) and 83–102 (KENLDPSNLMPPPNQTPAPD). Gly-2 carries the N-myristoyl glycine lipid modification. Residues 9–28 (AASTVQTSTPAASDHQTAAP) are compositionally biased toward polar residues. 2 HRM repeats span residues 31 to 36 (GCPMHE) and 41 to 46 (GCPVSA). A compositionally biased stretch (polar residues) spans 48–59 (PSDSTCGSKTNS). The span at 91 to 102 (LMPPPNQTPAPD) shows a compositional bias: pro residues.

It belongs to the cytochrome c-type heme lyase family.

Its subcellular location is the mitochondrion inner membrane. It localises to the membrane. It catalyses the reaction holo-[cytochrome c] = apo-[cytochrome c] + heme b. Lyase that catalyzes the covalent linking of the heme group to the cytochrome C apoprotein to produce the mature functional cytochrome. This Bos taurus (Bovine) protein is Holocytochrome c-type synthase.